Consider the following 157-residue polypeptide: MGGGGDHQQLSIKQYCLYFIIGIAYTDCFICALCKNLRLSTTMKLFVLLSILVWLAQPVLNRPLSIFYTKQILPRTYTPPMRELEYWCTYGKHCDFCWDCKNGICKNKVLDDMPLIVQNDYISKCSITRFIDRCMYFIEPKIPYIHYMNCSLPTYFS.

The next 2 helical transmembrane spans lie at 14–34 (QYCL…CALC) and 39–59 (LSTT…AQPV).

The protein belongs to the asfivirus MGF 110 family.

Its subcellular location is the host membrane. Plays a role in virus cell tropism, and may be required for efficient virus replication in macrophages. The chain is Protein MGF 110-13L from African swine fever virus (isolate Tick/Malawi/Lil 20-1/1983) (ASFV).